The chain runs to 747 residues: DNA ligase (747 aa).

NAD(+)-binding positions include 113–117, 161–162, and glutamate 190; these read DRAYD and SI. The active-site N6-AMP-lysine intermediate is lysine 192. Residues arginine 213, glutamate 249, lysine 364, and lysine 388 each contribute to the NAD(+) site. Positions 479, 482, 495, and 501 each coordinate Zn(2+). The 88-residue stretch at 660 to 747 folds into the BRCT domain; the sequence is TTNAPLSDLT…EHDDTLTWPP (88 aa).

Belongs to the NAD-dependent DNA ligase family. LigA subfamily. Mg(2+) serves as cofactor. The cofactor is Mn(2+).

It carries out the reaction NAD(+) + (deoxyribonucleotide)n-3'-hydroxyl + 5'-phospho-(deoxyribonucleotide)m = (deoxyribonucleotide)n+m + AMP + beta-nicotinamide D-nucleotide.. DNA ligase that catalyzes the formation of phosphodiester linkages between 5'-phosphoryl and 3'-hydroxyl groups in double-stranded DNA using NAD as a coenzyme and as the energy source for the reaction. It is essential for DNA replication and repair of damaged DNA. In Haloquadratum walsbyi (strain DSM 16790 / HBSQ001), this protein is DNA ligase.